We begin with the raw amino-acid sequence, 447 residues long: Protein O-GlcNAcase (447 aa).

In terms of domain architecture, GH84 spans 1-277 (MLTGVIEGFY…TTGAYLADPD (277 aa)). A protein contacts are provided by Gly-8, Lys-39, and Asp-115. Asp-116 (proton donor) is an active-site residue. A protein-binding positions include Tyr-160, 219-221 (WDN), Asp-226, and Asn-254.

It belongs to the glycosyl hydrolase 84 family.

It catalyses the reaction 3-O-(N-acetyl-beta-D-glucosaminyl)-L-seryl-[protein] + H2O = N-acetyl-D-glucosamine + L-seryl-[protein]. The catalysed reaction is 3-O-(N-acetyl-beta-D-glucosaminyl)-L-threonyl-[protein] + H2O = L-threonyl-[protein] + N-acetyl-D-glucosamine. Its activity is regulated as follows. Inhibited by PUGNac (O-(2-acetamido-2-deoxy-D-glucopyranosylidene)amino-N-phenylcarbamate). Functionally, cleaves GlcNAc from O-glycosylated proteins. Can use p-nitrophenyl-beta-GlcNAc and 4-methylumbelliferone-GlcNAc as substrate (in vitro). The polypeptide is Protein O-GlcNAcase (Oceanicola granulosus (strain ATCC BAA-861 / DSM 15982 / KCTC 12143 / HTCC2516)).